Reading from the N-terminus, the 127-residue chain is Small ribosomal subunit protein bS6 (127 aa).

The segment at 99–127 is disordered; that stretch reads PLPAPRVVPGSEPAAAPQEQPAANSEAAS. Residues 109–127 show a composition bias toward low complexity; the sequence is SEPAAAPQEQPAANSEAAS.

The protein belongs to the bacterial ribosomal protein bS6 family.

Binds together with bS18 to 16S ribosomal RNA. This is Small ribosomal subunit protein bS6 from Parasynechococcus marenigrum (strain WH8102).